We begin with the raw amino-acid sequence, 56 residues long: Bdellin B-3 (56 aa).

The 42-residue stretch at 1–42 (DTECVCTKELHRVCGSDGVTYDNECLATCHGASVAHDHACEG) folds into the Kazal-like domain. Cystine bridges form between cysteine 4–cysteine 29, cysteine 6–cysteine 25, and cysteine 14–cysteine 40.

Functionally, proteinase inhibitor. Blocks the activity of trypsin, plasmin and sperm acrosin. The protein is Bdellin B-3 of Hirudo medicinalis (Medicinal leech).